Reading from the N-terminus, the 537-residue chain is MAKLIAFDQDAREGILRGVDALANTVKVTLGPRGRNVVLDKAFGGPLVTNDGVTIARDIDVEDPFENLGAQLVKSVAVKTNDIAGDGTTTATLLAQALIAEGLRNVAAGANPIELNKGIEAATQKTLDELRARATPISAPQEVASVATVSSRDEVVGKIVAEAMEKVGKDGVVTVEESQSLETTLDITEGISFDKGYLSPYFINDTDTQTAVLENPAILLVRNKISSLPDFLPLLEKIVESNRPVLIIAEDIEGEPLQTLVVNSIRKTIKAVAVKSPYFGDRRKAFMDDLAVVTNATVVDPEVGINLSEAGVEVLGTARRVTVSKDETILVDGAGDAEAVEARRQQIRREIETTDSTWDREKAEERLAKLSGGVAVIRVGAATETEVNERKLRVEDAINAARAAAQEGIIAGGGSALVQIAETLKAYAEEFEGDQKVGIRALAAALSKPAYWIAANAGLDGAVIVARIADLPNNEGFNAATLEYGNLVDQGVIDPVKVTHSAVVNASSVARMVLTTEASIVDKPAEETADHGHGHHH.

Residues 29 to 32, 86 to 90, Gly413, 478 to 480, and Asp494 contribute to the ATP site; these read TLGP, DGTTT, and NAA.

This sequence belongs to the chaperonin (HSP60) family. Forms a cylinder of 14 subunits composed of two heptameric rings stacked back-to-back. Interacts with the co-chaperonin GroES.

It localises to the cytoplasm. The enzyme catalyses ATP + H2O + a folded polypeptide = ADP + phosphate + an unfolded polypeptide.. Together with its co-chaperonin GroES, plays an essential role in assisting protein folding. The GroEL-GroES system forms a nano-cage that allows encapsulation of the non-native substrate proteins and provides a physical environment optimized to promote and accelerate protein folding. The polypeptide is Chaperonin GroEL 1 (Corynebacterium efficiens (strain DSM 44549 / YS-314 / AJ 12310 / JCM 11189 / NBRC 100395)).